We begin with the raw amino-acid sequence, 201 residues long: Guanylyl cyclase-activating protein 1 (201 aa).

Gly-2 carries the N-myristoyl glycine lipid modification. Asn-3 is subject to Deamidated asparagine. EF-hand domains are found at residues Ser-31–Ser-49, Ser-51–Gly-86, Lys-87–Ile-122, and Thr-131–Leu-166. The Ca(2+) site is built by Asp-64, Asn-66, Asp-68, Tyr-70, Glu-75, Asp-100, Asp-102, Asn-104, Cys-106, Glu-111, Asp-144, Asn-146, Asp-148, Glu-150, and Glu-155.

Homodimer. As to expression, in the retina, it is expressed in rod and cone photoreceptors.

It localises to the membrane. It is found in the photoreceptor inner segment. The protein localises to the cell projection. The protein resides in the cilium. Its subcellular location is the photoreceptor outer segment. In terms of biological role, stimulates retinal guanylyl cyclase when free calcium ions concentration is low and inhibits guanylyl cyclase when free calcium ions concentration is elevated. This Ca(2+)-sensitive regulation of retinal guanylyl cyclase is a key event in recovery of the dark state of rod photoreceptors following light exposure. May be involved in cone photoreceptor light response and recovery of response in bright light. This Homo sapiens (Human) protein is Guanylyl cyclase-activating protein 1 (GUCA1A).